The following is a 355-amino-acid chain: Tryptophan--tRNA ligase (355 aa).

ATP contacts are provided by residues Gln13–Thr15 and Gly21–Asn22. The 'HIGH' region signature appears at Pro14–Asn22. Position 137 (Asp137) interacts with L-tryptophan. Residues Gly149–Asp151, Ile208, and Lys217–Ser221 each bind ATP. A 'KMSKS' region motif is present at residues Lys217–Ser221.

This sequence belongs to the class-I aminoacyl-tRNA synthetase family. In terms of assembly, homodimer.

It is found in the cytoplasm. The catalysed reaction is tRNA(Trp) + L-tryptophan + ATP = L-tryptophyl-tRNA(Trp) + AMP + diphosphate + H(+). Catalyzes the attachment of tryptophan to tRNA(Trp). The protein is Tryptophan--tRNA ligase of Mesorhizobium japonicum (strain LMG 29417 / CECT 9101 / MAFF 303099) (Mesorhizobium loti (strain MAFF 303099)).